The sequence spans 248 residues: Triosephosphate isomerase (248 aa).

11–13 (NWK) contacts substrate. Catalysis depends on His95, which acts as the Electrophile. The Proton acceptor role is filled by Glu167. Substrate-binding positions include Gly173, Ser212, and 233–234 (GG).

This sequence belongs to the triosephosphate isomerase family. As to quaternary structure, homodimer.

Its subcellular location is the cytoplasm. The catalysed reaction is D-glyceraldehyde 3-phosphate = dihydroxyacetone phosphate. The protein operates within carbohydrate biosynthesis; gluconeogenesis. It participates in carbohydrate degradation; glycolysis; D-glyceraldehyde 3-phosphate from glycerone phosphate: step 1/1. Involved in the gluconeogenesis. Catalyzes stereospecifically the conversion of dihydroxyacetone phosphate (DHAP) to D-glyceraldehyde-3-phosphate (G3P). This Ralstonia nicotianae (strain ATCC BAA-1114 / GMI1000) (Ralstonia solanacearum) protein is Triosephosphate isomerase.